The chain runs to 338 residues: MO25-like protein 2 (338 aa).

The protein belongs to the Mo25 family.

The protein resides in the cytoplasm. It localises to the cytoskeleton. It is found in the spindle pole. In terms of biological role, regulates asymmetric cell division in Q.p neuroblast lineage. Plays a role in cell shedding during embryogenesis. The sequence is that of MO25-like protein 2 (mop-25.2) from Caenorhabditis elegans.